We begin with the raw amino-acid sequence, 852 residues long: Bifunctional uridylyltransferase/uridylyl-removing enzyme (852 aa).

The uridylyltransferase stretch occupies residues 1–318 (MPANLSSALE…STPLRVTLRI (318 aa)). The tract at residues 319–672 (DDDYIQVNNQ…SRILPKSDSF (354 aa)) is uridylyl-removing. The region spanning 436 to 558 (VDDHILTVVR…VQTHERLSAL (123 aa)) is the HD domain. 2 consecutive ACT domains span residues 673–757 (QVMV…SRSR) and 785–852 (SVEI…EQLS).

It belongs to the GlnD family. Mg(2+) serves as cofactor.

The enzyme catalyses [protein-PII]-L-tyrosine + UTP = [protein-PII]-uridylyl-L-tyrosine + diphosphate. It carries out the reaction [protein-PII]-uridylyl-L-tyrosine + H2O = [protein-PII]-L-tyrosine + UMP + H(+). Uridylyltransferase (UTase) activity is inhibited by glutamine, while glutamine activates uridylyl-removing (UR) activity. In terms of biological role, modifies, by uridylylation and deuridylylation, the PII regulatory proteins (GlnB and homologs), in response to the nitrogen status of the cell that GlnD senses through the glutamine level. Under low glutamine levels, catalyzes the conversion of the PII proteins and UTP to PII-UMP and PPi, while under higher glutamine levels, GlnD hydrolyzes PII-UMP to PII and UMP (deuridylylation). Thus, controls uridylylation state and activity of the PII proteins, and plays an important role in the regulation of nitrogen assimilation and metabolism. The polypeptide is Bifunctional uridylyltransferase/uridylyl-removing enzyme (Neisseria meningitidis serogroup B (strain ATCC BAA-335 / MC58)).